We begin with the raw amino-acid sequence, 101 residues long: Urease subunit beta (101 aa).

This sequence belongs to the urease beta subunit family. As to quaternary structure, heterotrimer of UreA (gamma), UreB (beta) and UreC (alpha) subunits. Three heterotrimers associate to form the active enzyme.

The protein resides in the cytoplasm. It carries out the reaction urea + 2 H2O + H(+) = hydrogencarbonate + 2 NH4(+). It functions in the pathway nitrogen metabolism; urea degradation; CO(2) and NH(3) from urea (urease route): step 1/1. The sequence is that of Urease subunit beta from Granulibacter bethesdensis (strain ATCC BAA-1260 / CGDNIH1).